The sequence spans 225 residues: MAWRSSGSTNSELIDNLRNNRVFASQRAYDAMKSVDRGDFAPRAPYEDAPQRIGYNATVSAPHMHAAALDYLQNHLVAGAKALDVGSGSGYLTVCMAMMVGRNGTVVGIEHMPQLVELSEKNIRKHHSEQLERGNVIIIEGDGRQGFAEKAPYNAIHVGAASKGVPKALTDQLAEGGRMMIPVEQVDGNQVFMQIDKINGKIEQKIVEHVIYVPLTSREEQWNRN.

S-adenosyl-L-homocysteine-binding positions include 57–60 (ATVS), His65, Ser89, 110–111 (EH), 142–143 (DG), Thr216, and Gln221. The active site involves Ser60.

It belongs to the methyltransferase superfamily. L-isoaspartyl/D-aspartyl protein methyltransferase family. Monomer.

It localises to the cytoplasm. It is found in the cytosol. It catalyses the reaction [protein]-L-isoaspartate + S-adenosyl-L-methionine = [protein]-L-isoaspartate alpha-methyl ester + S-adenosyl-L-homocysteine. Functionally, initiates the repair of damaged proteins by catalyzing methyl esterification of L-isoaspartyl and D-aspartyl residues produced by spontaneous isomerization and racemization of L-aspartyl and L-asparaginyl residues in aging peptides and proteins. The chain is Protein-L-isoaspartate O-methyltransferase (pcm-1) from Caenorhabditis elegans.